The chain runs to 626 residues: ATP-dependent rRNA helicase spb4 (626 aa).

The Q motif signature appears at 14-42 (WDALTPSLAEWVLDAISSMGFEKMTPVQA). Positions 45–246 (IPLFMGNKDV…RVGLRNPVKI (202 aa)) constitute a Helicase ATP-binding domain. Position 58–65 (58–65 (AVTGSGKT)) interacts with ATP. Residues 194–197 (DEAD) carry the DEAD box motif. One can recognise a Helicase C-terminal domain in the interval 279–437 (ALLSLLSQLE…TTGEAAKILI (159 aa)). The interval 553–599 (QREAWSQKHEKQDLKELKREKKKRKREIERLEKMTDEEKKEEQAKEK) is disordered. 2 stretches are compositionally biased toward basic and acidic residues: residues 554–571 (REAW…ELKR) and 578–599 (REIE…AKEK). Positions 558-620 (SQKHEKQDLK…RKIEDDADVE (63 aa)) form a coiled coil.

It belongs to the DEAD box helicase family. DDX55/SPB4 subfamily. Component of pre-60S ribosomal complexes.

It localises to the nucleus. The protein localises to the nucleolus. It carries out the reaction ATP + H2O = ADP + phosphate + H(+). Its function is as follows. ATP-binding RNA helicase involved in the biogenesis of 60S ribosomal subunits. Binds 90S pre-ribosomal particles and dissociates from pre-60S ribosomal particles after processing of 27SB pre-rRNA. Required for the normal formation of 18S rRNA through the processing of pre-rRNAs at sites A0, A1 and A2, and the normal formation of 25S and 5.8S rRNAs through the processing of pre-rRNAs at sites C1 and C2. The polypeptide is ATP-dependent rRNA helicase spb4 (Botryotinia fuckeliana (strain B05.10) (Noble rot fungus)).